An 84-amino-acid chain; its full sequence is MARENKKELIGKVVSDKMSKTIVVEIVQRKMHPIYHKYLKVSKKVKAHDEKEVSKVGDKVKIIEVRPISKDKRWSLVEVLEKLK.

Belongs to the universal ribosomal protein uS17 family. In terms of assembly, part of the 30S ribosomal subunit.

Functionally, one of the primary rRNA binding proteins, it binds specifically to the 5'-end of 16S ribosomal RNA. This Borreliella burgdorferi (strain ATCC 35210 / DSM 4680 / CIP 102532 / B31) (Borrelia burgdorferi) protein is Small ribosomal subunit protein uS17.